We begin with the raw amino-acid sequence, 880 residues long: Leucine--tRNA ligase (880 aa).

The 'HIGH' region signature appears at 46–56 (PYPSGALHMGH). Positions 638–642 (KMSKS) match the 'KMSKS' region motif. Lysine 641 is a binding site for ATP.

The protein belongs to the class-I aminoacyl-tRNA synthetase family.

Its subcellular location is the cytoplasm. It carries out the reaction tRNA(Leu) + L-leucine + ATP = L-leucyl-tRNA(Leu) + AMP + diphosphate. The protein is Leucine--tRNA ligase of Xanthomonas euvesicatoria pv. vesicatoria (strain 85-10) (Xanthomonas campestris pv. vesicatoria).